We begin with the raw amino-acid sequence, 431 residues long: tRNA(Ile)-lysidine synthase (431 aa).

Position 19-24 (19-24 (STGIDS)) interacts with ATP.

Belongs to the tRNA(Ile)-lysidine synthase family.

The protein resides in the cytoplasm. It catalyses the reaction cytidine(34) in tRNA(Ile2) + L-lysine + ATP = lysidine(34) in tRNA(Ile2) + AMP + diphosphate + H(+). Its function is as follows. Ligates lysine onto the cytidine present at position 34 of the AUA codon-specific tRNA(Ile) that contains the anticodon CAU, in an ATP-dependent manner. Cytidine is converted to lysidine, thus changing the amino acid specificity of the tRNA from methionine to isoleucine. In Staphylococcus aureus (strain MW2), this protein is tRNA(Ile)-lysidine synthase.